Consider the following 398-residue polypeptide: Phosphoglycerate kinase (398 aa).

Substrate contacts are provided by residues 21 to 23 (DFN), R36, 59 to 62 (HLGR), R119, and R157. Residues K208, G296, E327, and 354–357 (GGDS) each bind ATP.

This sequence belongs to the phosphoglycerate kinase family. Monomer.

The protein resides in the cytoplasm. The enzyme catalyses (2R)-3-phosphoglycerate + ATP = (2R)-3-phospho-glyceroyl phosphate + ADP. Its pathway is carbohydrate degradation; glycolysis; pyruvate from D-glyceraldehyde 3-phosphate: step 2/5. The protein is Phosphoglycerate kinase (pgk) of Streptococcus pyogenes serotype M1.